Consider the following 145-residue polypeptide: MKTQDRSGSGPSQRMLRVGELVRHALADALQRGDHLDPALAGTIITVPEVRMSPDLKIATCFVMPLGGKDVNTVIKLLAANQKLLRTEVARRVELKSVPSLRFLRDTSFDEGARIDALLRRPDVARDLDTETDAEAGSETTKEED.

A disordered region spans residues 126–145; it reads RDLDTETDAEAGSETTKEED. Positions 130–145 are enriched in acidic residues; the sequence is TETDAEAGSETTKEED.

The protein belongs to the RbfA family. As to quaternary structure, monomer. Binds 30S ribosomal subunits, but not 50S ribosomal subunits or 70S ribosomes.

Its subcellular location is the cytoplasm. In terms of biological role, one of several proteins that assist in the late maturation steps of the functional core of the 30S ribosomal subunit. Associates with free 30S ribosomal subunits (but not with 30S subunits that are part of 70S ribosomes or polysomes). Required for efficient processing of 16S rRNA. May interact with the 5'-terminal helix region of 16S rRNA. This is Ribosome-binding factor A from Azorhizobium caulinodans (strain ATCC 43989 / DSM 5975 / JCM 20966 / LMG 6465 / NBRC 14845 / NCIMB 13405 / ORS 571).